The chain runs to 311 residues: RNA polymerase sigma factor SigA4 (311 aa).

The sigma-70 factor domain-2 stretch occupies residues 78–148; that stretch reads MLKANLRLVV…TRAIDNHART (71 aa). An Interaction with polymerase core subunit RpoC motif is present at residues 102-105; sequence DLIQ. Residues 157 to 234 are sigma-70 factor domain-3; it reads EKISRIKKMT…DPKSLEPMDA (78 aa). A sigma-70 factor domain-4 region spans residues 247-304; the sequence is WLAHLTEREQQVLQLRFGLHDGEQHTLAEIGRRLNVSRERIRQVEARALQKLRVLSQQ. A DNA-binding region (H-T-H motif) is located at residues 273–292; that stretch reads LAEIGRRLNVSRERIRQVEA.

It belongs to the sigma-70 factor family.

It localises to the cytoplasm. Sigma factors are initiation factors that promote the attachment of RNA polymerase to specific initiation sites and are then released. This chain is RNA polymerase sigma factor SigA4 (sigA4), found in Synechococcus elongatus (strain ATCC 33912 / PCC 7942 / FACHB-805) (Anacystis nidulans R2).